The chain runs to 1220 residues: Diacylglycerol kinase delta (1220 aa).

Residues 1-47 are disordered; sequence MAAAAGAPPPGPPQPPPPPPPEESSDSEPEAEPGSPQKLIRKVSTSG. The interval 1 to 52 is regulates association with membranes; it reads MAAAAGAPPPGPPQPPPPPPPEESSDSEPEAEPGSPQKLIRKVSTSGQIRQK. Residues 7–22 show a composition bias toward pro residues; sequence APPPGPPQPPPPPPPE. A PH domain is found at 53-146; that stretch reads TILKEGMLTK…WIAALKTVQN (94 aa). 2 consecutive Phorbol-ester/DAG-type zinc fingers follow at residues 163–213 and 235–286; these read MHNW…TSNC and PHQW…VMKC. Positions 317–451 constitute a DAGKc domain; that stretch reads SCTSPLLVFV…MLDRWSVMAY (135 aa). The tract at residues 554–584 is disordered; it reads DDESQASSSLSNPPPTIAEEAEDGDGSGNIC. The SAM domain maps to 1151–1214; sequence WGTEEVAAWL…LCGIKELSRS (64 aa).

It belongs to the eukaryotic diacylglycerol kinase family. In terms of assembly, homooligomer. Monomer. Interacts with AP2A2; regulates clathrin-dependent endocytosis. In terms of tissue distribution, widely expressed.

It is found in the cell membrane. The protein resides in the membrane. Its subcellular location is the clathrin-coated pit. It localises to the cytoplasm. The enzyme catalyses a 1,2-diacyl-sn-glycerol + ATP = a 1,2-diacyl-sn-glycero-3-phosphate + ADP + H(+). It carries out the reaction 1,2-di-(9Z-octadecenoyl)-sn-glycerol + ATP = 1,2-di-(9Z-octadecenoyl)-sn-glycero-3-phosphate + ADP + H(+). The catalysed reaction is 1-octadecanoyl-2-(5Z,8Z,11Z,14Z-eicosatetraenoyl)-sn-glycerol + ATP = 1-octadecanoyl-2-(5Z,8Z,11Z,14Z-eicosatetraenoyl)-sn-glycero-3-phosphate + ADP + H(+). The protein operates within lipid metabolism; glycerolipid metabolism. In terms of biological role, diacylglycerol kinase that converts diacylglycerol/DAG into phosphatidic acid/phosphatidate/PA and regulates the respective levels of these two bioactive lipids. Thereby, acts as a central switch between the signaling pathways activated by these second messengers with different cellular targets and opposite effects in numerous biological processes. By controlling the levels of diacylglycerol, regulates for instance the PKC and EGF receptor signaling pathways and plays a crucial role during development. May also regulate clathrin-dependent endocytosis. This is Diacylglycerol kinase delta from Mus musculus (Mouse).